We begin with the raw amino-acid sequence, 88 residues long: Small ribosomal subunit protein uS15 (88 aa).

It belongs to the universal ribosomal protein uS15 family. Part of the 30S ribosomal subunit. Forms a bridge to the 50S subunit in the 70S ribosome, contacting the 23S rRNA.

One of the primary rRNA binding proteins, it binds directly to 16S rRNA where it helps nucleate assembly of the platform of the 30S subunit by binding and bridging several RNA helices of the 16S rRNA. Functionally, forms an intersubunit bridge (bridge B4) with the 23S rRNA of the 50S subunit in the ribosome. In Borrelia hermsii (strain HS1 / DAH), this protein is Small ribosomal subunit protein uS15.